A 159-amino-acid polypeptide reads, in one-letter code: Cytochrome c-type biogenesis protein CcmE (159 aa).

Residues M1–R8 lie on the Cytoplasmic side of the membrane. A helical; Signal-anchor for type II membrane protein transmembrane segment spans residues L9 to A29. Residues L30–S159 are Periplasmic-facing. Heme contacts are provided by H130 and Y134. Residues H130–S159 form a disordered region.

Belongs to the CcmE/CycJ family.

It localises to the cell inner membrane. Its function is as follows. Heme chaperone required for the biogenesis of c-type cytochromes. Transiently binds heme delivered by CcmC and transfers the heme to apo-cytochromes in a process facilitated by CcmF and CcmH. This is Cytochrome c-type biogenesis protein CcmE from Citrobacter koseri (strain ATCC BAA-895 / CDC 4225-83 / SGSC4696).